Here is a 492-residue protein sequence, read N- to C-terminus: FAD-linked oxidoreductase pgmH (492 aa).

Positions 54 to 224 constitute an FAD-binding PCMH-type domain; that stretch reads SIRLATLVVY…TEFKYRVHKQ (171 aa).

Belongs to the oxygen-dependent FAD-linked oxidoreductase family. The cofactor is FAD.

It functions in the pathway pigment biosynthesis. The protein operates within secondary metabolite biosynthesis. In terms of biological role, FAD-linked oxidoreductase; part of the gene cluster that mediates the biosynthesis of pleosporalin A, ascomycone A, as well as a third cryptic naphthoquinone derived pigment, all responsible for the coloration of conidia. Essential for the production of pleosporalin A, but not the 2 other final products. The pathway begins with the biosynthesis of the cyclized heptaketide 3-acetonyl-1,6,8-trihydroxy-2-naphthaldehyde by the NR-PKS pgmA. The C-6 hydroxyl group is further methylated by the O-methyltransferase pgmB to yield fusarubinaldehyde which is in turn oxidized by the cytochrome P450 monooxygenase pgmC at C-9. The C-1 hydroxyl group is then methylated spontaneously. Although pgmE, pgmD and pgmH are essential for the production of pleosporalin A, it is not the case for the 2 other final products and it remains difficult to assign a specific function to each enzyme. PgmF and pgmG seem not to be involved in pigment biosynthesis although they were regulated by the cluster-specific transcription factor pgmR. This Aspergillus terreus protein is FAD-linked oxidoreductase pgmH.